A 130-amino-acid chain; its full sequence is Ribonuclease P protein component 2 (130 aa).

This sequence belongs to the eukaryotic/archaeal RNase P protein component 2 family. In terms of assembly, consists of a catalytic RNA component and at least 4-5 protein subunits.

The protein localises to the cytoplasm. It carries out the reaction Endonucleolytic cleavage of RNA, removing 5'-extranucleotides from tRNA precursor.. Part of ribonuclease P, a protein complex that generates mature tRNA molecules by cleaving their 5'-ends. In Methanococcus maripaludis (strain C7 / ATCC BAA-1331), this protein is Ribonuclease P protein component 2.